A 92-amino-acid polypeptide reads, in one-letter code: MRFCPKCGSFLKVKGNKMVCSKCGYSDHDVEKVILKENVAHENDKTIIADGETIEGRVAISLCPRCGSVRAILLNKKKRLYRCMTCNFVYNI.

The segment at 1 to 31 is ZR-N; that stretch reads MRFCPKCGSFLKVKGNKMVCSKCGYSDHDVE. Positions 4, 7, 20, and 23 each coordinate Zn(2+). The flexible linker stretch occupies residues 32–56; it reads KVILKENVAHENDKTIIADGETIEG. Positions 55–92 are ZR-C; it reads EGRVAISLCPRCGSVRAILLNKKKRLYRCMTCNFVYNI. Residues Cys63 and Cys66 each contribute to the Zn(2+) site. Residues Lys76, Lys77, and Lys78 contribute to the active site. Zn(2+) contacts are provided by Cys83 and Cys86.

Belongs to the archaeal RpoM/eukaryotic RPA12/RPB9/RPC11 RNA polymerase family. In terms of assembly, interacts with RNA polymerase. It depends on Zn(2+) as a cofactor.

A potent inhibitor of RNA polymerase (RNAP) probably involved in viral defense. Destabilizes the transcription pre-initiation complex of TBP, TFB, DNA and RNAP, inhibits abortive transcription initiation, productive initiation and transcription elongation. Increases the RNAP KM for NTPs about 50-fold. Overexpression of TFS1-tip4 (TFS1 with the active tip of this protein, phenocopies this protein) in S.acidocaldarius MW001 leads to severe growth inhibition. When bound to RNAP induces conformational changes that widen the DNA-binding channel, probably destabilizing the interaction of DNA with RNAP. The sequence is that of Transcription factor S4 from Saccharolobus solfataricus (strain ATCC 35092 / DSM 1617 / JCM 11322 / P2) (Sulfolobus solfataricus).